A 143-amino-acid polypeptide reads, in one-letter code: Peptide methionine sulfoxide reductase MsrB (143 aa).

Positions 16–139 (DAELRRRLTP…NSAALNFESR (124 aa)) constitute a MsrB domain. Zn(2+) contacts are provided by C55, C58, C104, and C107. C128 serves as the catalytic Nucleophile.

This sequence belongs to the MsrB Met sulfoxide reductase family. The cofactor is Zn(2+).

It carries out the reaction L-methionyl-[protein] + [thioredoxin]-disulfide + H2O = L-methionyl-(R)-S-oxide-[protein] + [thioredoxin]-dithiol. This chain is Peptide methionine sulfoxide reductase MsrB, found in Burkholderia multivorans (strain ATCC 17616 / 249).